The following is a 231-amino-acid chain: uncharacterized protein (231 aa).

Helical transmembrane passes span 26–46 (TYSW…LTAQ), 56–76 (SLRL…SMFA), 84–104 (AGAL…ALLF), 112–132 (ITAF…GFVI), 142–162 (FFLF…FVGS), 163–183 (SALS…LTAY), and 206–226 (INGA…LLNI).

It belongs to the BI1 family.

The protein resides in the cell membrane. This is an uncharacterized protein from Deinococcus radiodurans (strain ATCC 13939 / DSM 20539 / JCM 16871 / CCUG 27074 / LMG 4051 / NBRC 15346 / NCIMB 9279 / VKM B-1422 / R1).